Reading from the N-terminus, the 891-residue chain is Translation initiation factor IF-2 (891 aa).

The tract at residues Lys50–Ser303 is disordered. 2 stretches are compositionally biased toward basic and acidic residues: residues Thr102–Asp237 and His245–Pro261. A tr-type G domain is found at Gly390–Thr559. The interval Gly399–Thr406 is G1. Gly399–Thr406 is a GTP binding site. Residues Gly424 to His428 form a G2 region. The G3 stretch occupies residues Asp445–Gly448. Residues Asp445 to His449 and Asn499 to Asp502 contribute to the GTP site. The tract at residues Asn499–Asp502 is G4. The G5 stretch occupies residues Ser535–Lys537.

Belongs to the TRAFAC class translation factor GTPase superfamily. Classic translation factor GTPase family. IF-2 subfamily.

It is found in the cytoplasm. Its function is as follows. One of the essential components for the initiation of protein synthesis. Protects formylmethionyl-tRNA from spontaneous hydrolysis and promotes its binding to the 30S ribosomal subunits. Also involved in the hydrolysis of GTP during the formation of the 70S ribosomal complex. This chain is Translation initiation factor IF-2, found in Aliivibrio salmonicida (strain LFI1238) (Vibrio salmonicida (strain LFI1238)).